Here is a 135-residue protein sequence, read N- to C-terminus: Interleukin-4 (135 aa).

The N-terminal stretch at 1–24 (MGLTSQLIPALVCLLVCTSHFVHG) is a signal peptide. Disulfide bonds link cysteine 27/cysteine 135, cysteine 48/cysteine 85, and cysteine 70/cysteine 105. N-linked (GlcNAc...) asparagine glycans are attached at residues asparagine 62 and asparagine 96.

The protein belongs to the IL-4/IL-13 family.

It localises to the secreted. Participates in at least several B-cell activation processes as well as of other cell types. It is a costimulator of DNA-synthesis. It induces the expression of class II MHC molecules on resting B-cells. It enhances both secretion and cell surface expression of IgE and IgG1. It also regulates the expression of the low affinity Fc receptor for IgE (CD23) on both lymphocytes and monocytes. Positively regulates IL31RA expression in macrophages. Stimulates autophagy in dendritic cells by interfering with mTORC1 signaling and through the induction of RUFY4. In Capra hircus (Goat), this protein is Interleukin-4 (IL4).